A 637-amino-acid chain; its full sequence is Phosphomethylpyrimidine synthase (637 aa).

Residues Asn242, Met271, Tyr300, His336, 356–358, 397–400, and Glu436 contribute to the substrate site; these read SRG and DGLR. His440 provides a ligand contact to Zn(2+). Tyr463 provides a ligand contact to substrate. A Zn(2+)-binding site is contributed by His504. [4Fe-4S] cluster contacts are provided by Cys584, Cys587, and Cys592.

This sequence belongs to the ThiC family. Homodimer. Requires [4Fe-4S] cluster as cofactor.

It catalyses the reaction 5-amino-1-(5-phospho-beta-D-ribosyl)imidazole + S-adenosyl-L-methionine = 4-amino-2-methyl-5-(phosphooxymethyl)pyrimidine + CO + 5'-deoxyadenosine + formate + L-methionine + 3 H(+). The protein operates within cofactor biosynthesis; thiamine diphosphate biosynthesis. Its function is as follows. Catalyzes the synthesis of the hydroxymethylpyrimidine phosphate (HMP-P) moiety of thiamine from aminoimidazole ribotide (AIR) in a radical S-adenosyl-L-methionine (SAM)-dependent reaction. The polypeptide is Phosphomethylpyrimidine synthase (Janthinobacterium sp. (strain Marseille) (Minibacterium massiliensis)).